The chain runs to 153 residues: Ribosome maturation factor RimP (153 aa).

The protein belongs to the RimP family.

The protein resides in the cytoplasm. Its function is as follows. Required for maturation of 30S ribosomal subunits. This chain is Ribosome maturation factor RimP, found in Glaesserella parasuis serovar 5 (strain SH0165) (Haemophilus parasuis).